A 669-amino-acid chain; its full sequence is Major S-layer protein (669 aa).

An N-terminal signal peptide occupies residues 1-24; that stretch reads MKRFAAVSLAALMLLTVFASAASA. N-linked (GlcNAc...) asparagine glycosylation is found at Asn-36, Asn-70, Asn-116, Asn-600, and Asn-607. The tract at residues 588-648 is disordered; sequence DGEVVDDDED…PTEADGTTPG (61 aa). Positions 590–627 are enriched in acidic residues; the sequence is EVVDDDEDDDNVTEPVDNDTEVEEPTEEPTEGPTEEPT. A helical transmembrane segment spans residues 645-665; the sequence is TTPGFGVVLGLVGLLAVVYLV.

Belongs to the Methanosarcinales S-layer protein family. Glycosylated.

The protein localises to the secreted. The protein resides in the cell wall. It localises to the S-layer. It is found in the cell membrane. Functionally, S-layer protein. The S-layer is a paracrystalline mono-layered assembly of proteins which coat the surface of the cell. The chain is Major S-layer protein from Methanosarcina mazei (strain ATCC BAA-159 / DSM 3647 / Goe1 / Go1 / JCM 11833 / OCM 88) (Methanosarcina frisia).